The chain runs to 102 residues: Urease subunit beta (102 aa).

The protein belongs to the urease beta subunit family. As to quaternary structure, heterotrimer of UreA (gamma), UreB (beta) and UreC (alpha) subunits. Three heterotrimers associate to form the active enzyme.

It is found in the cytoplasm. The catalysed reaction is urea + 2 H2O + H(+) = hydrogencarbonate + 2 NH4(+). It participates in nitrogen metabolism; urea degradation; CO(2) and NH(3) from urea (urease route): step 1/1. This chain is Urease subunit beta, found in Blochmanniella pennsylvanica (strain BPEN).